A 255-amino-acid chain; its full sequence is tRNA (guanine-N(1)-)-methyltransferase (255 aa).

S-adenosyl-L-methionine contacts are provided by residues Gly-113 and 133–138 (IGDYVL).

It belongs to the RNA methyltransferase TrmD family. As to quaternary structure, homodimer.

It is found in the cytoplasm. It catalyses the reaction guanosine(37) in tRNA + S-adenosyl-L-methionine = N(1)-methylguanosine(37) in tRNA + S-adenosyl-L-homocysteine + H(+). Specifically methylates guanosine-37 in various tRNAs. This chain is tRNA (guanine-N(1)-)-methyltransferase, found in Salmonella paratyphi A (strain ATCC 9150 / SARB42).